Reading from the N-terminus, the 468-residue chain is 6-phosphogluconate dehydrogenase, decarboxylating (468 aa).

NADP(+) is bound by residues Gly10–Gly15, Asn33–Ser35, Val74–Ala76, and Asn102. Residues Asn102 and Ser128–Gly130 contribute to the substrate site. Lys183 serves as the catalytic Proton acceptor. His186–Asn187 contacts substrate. Glu190 serves as the catalytic Proton donor. Tyr191, Lys260, Arg287, Arg445, and His451 together coordinate substrate.

This sequence belongs to the 6-phosphogluconate dehydrogenase family. As to quaternary structure, homodimer.

It carries out the reaction 6-phospho-D-gluconate + NADP(+) = D-ribulose 5-phosphate + CO2 + NADPH. It participates in carbohydrate degradation; pentose phosphate pathway; D-ribulose 5-phosphate from D-glucose 6-phosphate (oxidative stage): step 3/3. In terms of biological role, catalyzes the oxidative decarboxylation of 6-phosphogluconate to ribulose 5-phosphate and CO(2), with concomitant reduction of NADP to NADPH. In Escherichia coli, this protein is 6-phosphogluconate dehydrogenase, decarboxylating (gnd).